The sequence spans 80 residues: DNA-directed RNA polymerase subunit Rpo5 (80 aa).

Belongs to the archaeal Rpo5/eukaryotic RPB5 RNA polymerase subunit family. In terms of assembly, part of the RNA polymerase complex.

Its subcellular location is the cytoplasm. The enzyme catalyses RNA(n) + a ribonucleoside 5'-triphosphate = RNA(n+1) + diphosphate. DNA-dependent RNA polymerase (RNAP) catalyzes the transcription of DNA into RNA using the four ribonucleoside triphosphates as substrates. In Thermofilum pendens (strain DSM 2475 / Hrk 5), this protein is DNA-directed RNA polymerase subunit Rpo5.